A 61-amino-acid chain; its full sequence is MNKLSLVLVAGFLLVGCASESVKDPDALPNGIMQPVEGTGAVAGGSFMPEIQKNTIPTQMK.

This is an uncharacterized protein from Haemophilus influenzae (strain ATCC 51907 / DSM 11121 / KW20 / Rd).